The sequence spans 48 residues: uncharacterized protein (48 aa).

The interval 1–20 is disordered; sequence MLLKNWPSRRIQRDKSKRAG.

This is an uncharacterized protein from Bacillus subtilis (strain 168).